The primary structure comprises 350 residues: Quinone oxidoreductase-like protein 2 (350 aa).

An N6-acetyllysine modification is found at Lys-36. Lys-201 is subject to N6-succinyllysine. 2 positions are modified to N6-acetyllysine: Lys-302 and Lys-328.

This sequence belongs to the zinc-containing alcohol dehydrogenase family. Quinone oxidoreductase subfamily.

In Rattus norvegicus (Rat), this protein is Quinone oxidoreductase-like protein 2.